Here is a 312-residue protein sequence, read N- to C-terminus: L-lactate dehydrogenase (312 aa).

NAD(+) contacts are provided by residues V11, D32, R37, and G76–A77. Residues Q79, R85, and N117–D120 contribute to the substrate site. Residues V115–N117 and T140 each bind NAD(+). D145–R148 contributes to the substrate binding site. Beta-D-fructose 1,6-bisphosphate contacts are provided by R150 and H165. The Proton acceptor role is filled by H172. Y217 is subject to Phosphotyrosine. A substrate-binding site is contributed by T226.

It belongs to the LDH/MDH superfamily. LDH family. Homotetramer.

It localises to the cytoplasm. It catalyses the reaction (S)-lactate + NAD(+) = pyruvate + NADH + H(+). It participates in fermentation; pyruvate fermentation to lactate; (S)-lactate from pyruvate: step 1/1. Its activity is regulated as follows. Allosterically activated by fructose 1,6-bisphosphate (FBP). Its function is as follows. Catalyzes the conversion of lactate to pyruvate. This is L-lactate dehydrogenase from Pseudothermotoga lettingae (strain ATCC BAA-301 / DSM 14385 / NBRC 107922 / TMO) (Thermotoga lettingae).